We begin with the raw amino-acid sequence, 308 residues long: Aspartate carbamoyltransferase catalytic subunit (308 aa).

Positions 55 and 56 each coordinate carbamoyl phosphate. Lys-85 serves as a coordination point for L-aspartate. Carbamoyl phosphate contacts are provided by Arg-106, His-135, and Gln-138. Residues Arg-168 and Arg-229 each contribute to the L-aspartate site. Carbamoyl phosphate contacts are provided by Leu-267 and Pro-268.

Belongs to the aspartate/ornithine carbamoyltransferase superfamily. ATCase family. As to quaternary structure, heterododecamer (2C3:3R2) of six catalytic PyrB chains organized as two trimers (C3), and six regulatory PyrI chains organized as three dimers (R2).

It catalyses the reaction carbamoyl phosphate + L-aspartate = N-carbamoyl-L-aspartate + phosphate + H(+). The protein operates within pyrimidine metabolism; UMP biosynthesis via de novo pathway; (S)-dihydroorotate from bicarbonate: step 2/3. Catalyzes the condensation of carbamoyl phosphate and aspartate to form carbamoyl aspartate and inorganic phosphate, the committed step in the de novo pyrimidine nucleotide biosynthesis pathway. This Laribacter hongkongensis (strain HLHK9) protein is Aspartate carbamoyltransferase catalytic subunit.